A 323-amino-acid chain; its full sequence is Mycothiol acetyltransferase (323 aa).

A 1D-myo-inositol 2-(L-cysteinylamino)-2-deoxy-alpha-D-glucopyranoside-binding site is contributed by E44. Residue 98–100 (LAV) participates in acetyl-CoA binding. The region spanning 173-323 (VSLRAFIPGQ…DVMYGPKNGG (151 aa)) is the N-acetyltransferase domain. Positions 200, 240, and 253 each coordinate 1D-myo-inositol 2-(L-cysteinylamino)-2-deoxy-alpha-D-glucopyranoside. Residues 257–259 (VGV) and 264–270 (QGMGLGK) each bind acetyl-CoA. Y291 is a binding site for 1D-myo-inositol 2-(L-cysteinylamino)-2-deoxy-alpha-D-glucopyranoside.

Belongs to the acetyltransferase family. MshD subfamily. Monomer.

The catalysed reaction is 1D-myo-inositol 2-(L-cysteinylamino)-2-deoxy-alpha-D-glucopyranoside + acetyl-CoA = mycothiol + CoA + H(+). Its function is as follows. Catalyzes the transfer of acetyl from acetyl-CoA to desacetylmycothiol (Cys-GlcN-Ins) to form mycothiol. This is Mycothiol acetyltransferase from Arthrobacter sp. (strain FB24).